Consider the following 196-residue polypeptide: uncharacterized protein (196 aa).

A signal peptide spans 1–21; the sequence is MNGKQCFCFFLFHLFYTGLFA. Residue Cys22 is the site of N-palmitoyl cysteine attachment. Residue Cys22 is the site of S-diacylglycerol cysteine attachment.

It is found in the cell membrane. This is an uncharacterized protein from Treponema pallidum (strain Nichols).